The sequence spans 242 residues: Small ribosomal subunit protein uS2 (242 aa).

Belongs to the universal ribosomal protein uS2 family.

In Shewanella pealeana (strain ATCC 700345 / ANG-SQ1), this protein is Small ribosomal subunit protein uS2.